A 248-amino-acid chain; its full sequence is 5'-nucleotidase SurE (248 aa).

The a divalent metal cation site is built by D8, D9, S39, and N91.

It belongs to the SurE nucleotidase family. It depends on a divalent metal cation as a cofactor.

Its subcellular location is the cytoplasm. The catalysed reaction is a ribonucleoside 5'-phosphate + H2O = a ribonucleoside + phosphate. In terms of biological role, nucleotidase that shows phosphatase activity on nucleoside 5'-monophosphates. This Neisseria meningitidis serogroup A / serotype 4A (strain DSM 15465 / Z2491) protein is 5'-nucleotidase SurE.